Consider the following 349-residue polypeptide: Anthranilate phosphoribosyltransferase (349 aa).

5-phospho-alpha-D-ribose 1-diphosphate is bound by residues Gly-82, 85–86 (GD), 92–95 (NVST), 110–118 (KHGNRAVSG), and Ser-122. An anthranilate-binding site is contributed by Gly-82. Residue Ser-94 coordinates Mg(2+). Asn-113 provides a ligand contact to anthranilate. Arg-168 is a binding site for anthranilate. Mg(2+) contacts are provided by Asp-227 and Glu-228.

The protein belongs to the anthranilate phosphoribosyltransferase family. Homodimer. Requires Mg(2+) as cofactor.

It catalyses the reaction N-(5-phospho-beta-D-ribosyl)anthranilate + diphosphate = 5-phospho-alpha-D-ribose 1-diphosphate + anthranilate. Its pathway is amino-acid biosynthesis; L-tryptophan biosynthesis; L-tryptophan from chorismate: step 2/5. Catalyzes the transfer of the phosphoribosyl group of 5-phosphorylribose-1-pyrophosphate (PRPP) to anthranilate to yield N-(5'-phosphoribosyl)-anthranilate (PRA). This chain is Anthranilate phosphoribosyltransferase, found in Pseudomonas fluorescens (strain SBW25).